A 118-amino-acid polypeptide reads, in one-letter code: MARVKRGVQANRRHKKILKRAKGYYGARSRVYRVAVQAVTKAGQYAYRDRRNKKRTFRRLWIARINAGARLNGLSYSRFINGMKKANIAIDRRVLADIAMHDAATFTALVEKAKAELA.

Belongs to the bacterial ribosomal protein bL20 family.

Its function is as follows. Binds directly to 23S ribosomal RNA and is necessary for the in vitro assembly process of the 50S ribosomal subunit. It is not involved in the protein synthesizing functions of that subunit. This Psychrobacter arcticus (strain DSM 17307 / VKM B-2377 / 273-4) protein is Large ribosomal subunit protein bL20.